Reading from the N-terminus, the 332-residue chain is CAX-interacting protein 4 (332 aa).

Residues 33–59 (GYDPYAPTSKEEPKTTQQKTEDPENSY) are disordered. The segment covering 41 to 54 (SKEEPKTTQQKTED) has biased composition (basic and acidic residues). Residues 81–98 (GSCKKCGRVGHLTFQCRN) form a CCHC-type zinc finger. Residues 124–133 (IRRGVGKGEV) are compositionally biased toward basic and acidic residues. Positions 124–332 (IRRGVGKGEV…RKRHHRKERE (209 aa)) are disordered. Over residues 134–153 (EEVSSEEEEESESSDSDVDS) the composition is skewed to acidic residues. A compositionally biased stretch (basic and acidic residues) spans 154 to 163 (EMERIIAERF). Composition is skewed to basic residues over residues 198-214 (RKRR…HKRR) and 227-236 (SKRRKERRGR). The segment covering 241–250 (DDSDESEDED) has biased composition (acidic residues). Composition is skewed to basic residues over residues 254–269 (VKRK…RSRR) and 314–332 (SSKR…KERE).

Interacts with CAX1. Expressed in leaves, stems and roots, and at lower levels in flowers.

It localises to the nucleus. Functionally, may regulate CAX1 cation transporter. The polypeptide is CAX-interacting protein 4 (CXIP4) (Arabidopsis thaliana (Mouse-ear cress)).